A 1136-amino-acid polypeptide reads, in one-letter code: METRPSFAPNLYFCDARLVGPLHAWPPLFERVAAWGFDHVLIGGLWAASRRGYPRHVADPDRPAESFATSLDATSALARLSDSAREHGLRIAVEVVVDRVAREHPLHDAHRAWYVVDERDDALIDPRTAALAHDVAHANVGSAAALDALADWWRARLGALADAGAAAFLVDAPQRMPAHWWAALLRALRQARADLPVIAGVPGREREALAQLACAGFDAAFSSLRWWDLRAPWFVEEHRLLRRVGAPIAFPDAFDGPRLAHDWRQAAPETIERAHRRALWTAAALGTGWLVPMGFERGVAVELMAREPRADAYRAALDSAPFDLSGAIAEANALRRATPALRGNGEIAQLTGADAPATVLLRGARTALEYDDEAALIAVNPDLAHPAAIAPCAALAGVPGGFTRFAPFADGRRPRMGALEPFALAAGACTLLRAQRARPVTTAPAEDRRGNRPGTRASVTAALAGERIAIERIEPVVDDGRFAVKRVIGERLAVRAAIFADGHARLAAAVQWRAADENGWHEARCAAEGNDAWRADIPLERLGRHLFRVIAWRDDWATLVDEIGKKHAAGQAVALELEEARRLAADVLTRAPEANPAALAVLREFAAALDAAPPDQRLALIGAPHVADAFAALRERAFATRDAPVFPVDVERRAARFASWYEMFPRSASDDVRRHGTFDDVVAHLPRIRDMGFDVLYFPPIHPIGTTARKGRNNSLQAAPDDVGSPYAIGSPAGGHTAVHPQLGSLDAFRRLVAAARAHDLEIALDFAVQCSPDHPWLTEHPGWFAWRPDGSLRYAENPPKRYQDIVNPDFYARDAMPALWIALRDVVLFWIDAGVRIFRVDNPHTKPLPFWAWMIADVRARHPDTVFLSEAFTRPSMMYRLAKLGFSQSYTYFTWRESKREFIDYLTELADGPAREYFRPNFFVNTPDINPRHLQQAPRTQFVIRAALAATLSGLWGMYSGFELCESDALPDSEEYRDAEKYELRARDWRRPGHIGDEIARLNRARRDNPALQTHLGIRFAHAPNDAVLVFSKATPAHDNVVVVAISLDPWHPQATDFTLDAALYRGWGIADGERLVAVDQTADHVETWHGRRHYVALDPHVRPFAIWRVAPAAGVARGARDDARDVPAQEVHER.

A unknown region spans residues 1-439 (METRPSFAPN…TLLRAQRARP (439 aa)). The interval 440–1136 (VTTAPAEDRR…DVPAQEVHER (697 aa)) is maltosyltransferase. Alpha-maltose 1-phosphate contacts are provided by Lys-710, Gln-770, and Asp-805. Asp-842 acts as the Nucleophile in catalysis. Position 843 (Asn-843) interacts with alpha-maltose 1-phosphate. Glu-871 serves as the catalytic Proton donor. Residue 982–983 (KY) coordinates alpha-maltose 1-phosphate.

The protein in the C-terminal section; belongs to the glycosyl hydrolase 13 family. GlgE subfamily. Homodimer.

It carries out the reaction alpha-maltose 1-phosphate + [(1-&gt;4)-alpha-D-glucosyl](n) = [(1-&gt;4)-alpha-D-glucosyl](n+2) + phosphate. Its function is as follows. Maltosyltransferase that uses maltose 1-phosphate (M1P) as the sugar donor to elongate linear or branched alpha-(1-&gt;4)-glucans. Is involved in a branched alpha-glucan biosynthetic pathway from trehalose, together with TreS, Mak and GlgB. The sequence is that of Alpha-1,4-glucan:maltose-1-phosphate maltosyltransferase (glgE) from Burkholderia pseudomallei (strain K96243).